A 353-amino-acid polypeptide reads, in one-letter code: Photosystem II protein D1 (353 aa).

Threonine 2 is modified (N-acetylthreonine). Position 2 is a phosphothreonine (threonine 2). Helical transmembrane passes span 29-46 (YIGW…TATS), 118-133 (HFLL…EWEL), and 142-156 (WIAV…AAAA). Histidine 118 lines the chlorophyll a pocket. Tyrosine 126 serves as a coordination point for pheophytin a. Aspartate 170 and glutamate 189 together coordinate [CaMn4O5] cluster. The helical transmembrane segment at 197 to 218 (FHMLGVAGVFGGSLFSAMHGSL) threads the bilayer. Histidine 198 is a binding site for chlorophyll a. A quinone contacts are provided by residues histidine 215 and 264–265 (SF). Histidine 215 is a Fe cation binding site. Residue histidine 272 participates in Fe cation binding. Residues 274 to 288 (FLAAWPVVGIWFTAL) traverse the membrane as a helical segment. 4 residues coordinate [CaMn4O5] cluster: histidine 332, glutamate 333, aspartate 342, and alanine 344. A propeptide spanning residues 345-353 (AVEAPSTNG) is cleaved from the precursor.

The protein belongs to the reaction center PufL/M/PsbA/D family. PSII is composed of 1 copy each of membrane proteins PsbA, PsbB, PsbC, PsbD, PsbE, PsbF, PsbH, PsbI, PsbJ, PsbK, PsbL, PsbM, PsbT, PsbX, PsbY, PsbZ, Psb30/Ycf12, at least 3 peripheral proteins of the oxygen-evolving complex and a large number of cofactors. It forms dimeric complexes. Requires The D1/D2 heterodimer binds P680, chlorophylls that are the primary electron donor of PSII, and subsequent electron acceptors. It shares a non-heme iron and each subunit binds pheophytin, quinone, additional chlorophylls, carotenoids and lipids. D1 provides most of the ligands for the Mn4-Ca-O5 cluster of the oxygen-evolving complex (OEC). There is also a Cl(-1) ion associated with D1 and D2, which is required for oxygen evolution. The PSII complex binds additional chlorophylls, carotenoids and specific lipids. as cofactor. In terms of processing, tyr-161 forms a radical intermediate that is referred to as redox-active TyrZ, YZ or Y-Z. Post-translationally, C-terminally processed by CTPA; processing is essential to allow assembly of the oxygen-evolving complex and thus photosynthetic growth.

It is found in the plastid. The protein localises to the chloroplast thylakoid membrane. The catalysed reaction is 2 a plastoquinone + 4 hnu + 2 H2O = 2 a plastoquinol + O2. Its function is as follows. Photosystem II (PSII) is a light-driven water:plastoquinone oxidoreductase that uses light energy to abstract electrons from H(2)O, generating O(2) and a proton gradient subsequently used for ATP formation. It consists of a core antenna complex that captures photons, and an electron transfer chain that converts photonic excitation into a charge separation. The D1/D2 (PsbA/PsbD) reaction center heterodimer binds P680, the primary electron donor of PSII as well as several subsequent electron acceptors. The sequence is that of Photosystem II protein D1 from Panax ginseng (Korean ginseng).